The chain runs to 337 residues: Diacylglycerol O-acyltransferase 2-like protein 6 (337 aa).

2 helical membrane-spanning segments follow: residues isoleucine 22 to phenylalanine 42 and tyrosine 102 to threonine 122.

The protein belongs to the diacylglycerol acyltransferase family.

It is found in the endoplasmic reticulum membrane. The catalysed reaction is 1,2-di-(9Z-octadecenoyl)-sn-glycerol + (9Z)-octadecenoyl-CoA = 1,2,3-tri-(9Z-octadecenoyl)-glycerol + CoA. In terms of biological role, diglyceride acyltransferase that uses fatty acyl-CoA as substrate. Particularly active with oleate as a substrate. Has no wax synthase activity to produce wax esters. This is Diacylglycerol O-acyltransferase 2-like protein 6 (Dgat2l6) from Mus musculus (Mouse).